A 466-amino-acid chain; its full sequence is Asparagine--tRNA ligase (466 aa).

This sequence belongs to the class-II aminoacyl-tRNA synthetase family. As to quaternary structure, homodimer.

It localises to the cytoplasm. It carries out the reaction tRNA(Asn) + L-asparagine + ATP = L-asparaginyl-tRNA(Asn) + AMP + diphosphate + H(+). This Salmonella choleraesuis (strain SC-B67) protein is Asparagine--tRNA ligase.